The chain runs to 1149 residues: Polyprotein nsP1234 (1149 aa).

In terms of domain architecture, Macro spans 1 to 160 (APSYRVRRTD…KIQEAIDRRT (160 aa)). Asp-10, Asn-24, Gly-32, Gly-112, Val-113, and Phe-114 together coordinate ADP-D-ribose. Residues Cys-262, Cys-264, Cys-287, and Cys-305 each contribute to the Zn(2+) site. Phosphothreonine; by host is present on Thr-344. 2 short sequence motifs (FGDF; binding to host G3BP1) span residues 512–515 (FGDF) and 523–526 (FGDI). In terms of domain architecture, RdRp catalytic spans 903–1018 (DAVLETDIAS…HGVRSDPLMA (116 aa)).

As to quaternary structure, interacts with mRNA-capping enzyme nsP1. Interacts with host DDX1. RNA-directed Interacts with host DDX3. Interacts (via C-terminus) with host G3BP1; this interaction inhibits the formation of host stress granules on viral mRNAs and the nsp3-G3BP1 complexes bind viral RNAs and probably orchestrate the assembly of viral replication complexes. Interacts (via C-terminus) with host G3BP2; this interaction inhibits the formation of host stress granules on viral mRNAs and the nsp3-G3BP2 complexes bind viral RNAs and probably orchestrate the assembly of viral replication complexes. In terms of assembly, interacts with itself. Interacts with mRNA-capping enzyme nsP1. Interacts with protease nsP2. Interacts with itself. The cofactor is Mg(2+). It depends on Mn(2+) as a cofactor. In terms of processing, polyprotein P1234: Specific enzymatic cleavages in vivo yield mature proteins. The processing of the polyprotein is temporally regulated. In early stages (1.7 hpi), P1234 is first cleaved in trans through its nsP2 protease activity, releasing P123' and nsP4, which associate to form the early replication complex. At the same time, P1234 is also cut at the nsP1/nsP2 site early in infection but with lower efficiency. After replication of the viral minus-strand RNAs (4 hpi), the polyproteins are cut at the nsP1/nsP2 and nsP2/nsP3 sites very efficiently, preventing accumulation of P123' and P1234 and allowing the formation of the late replication complex. NsP3'/nsP4 site is not cleaved anymore and P34 is produced rather than nsP4. Specific enzymatic cleavages in vivo yield mature proteins. The processing of the polyprotein is temporally regulated. In early stages (1.7 hpi), P123 is cleaved at the nsP1/nsP2 site with low efficiency. After replication of the viral minus-strand RNAs (4 hpi), the polyproteins are cut at the nsP1/nsP2 and nsP2/nsP3 sites very efficiently, preventing accumulation of P123 and allowing the formation of the late replication complex. Post-translationally, phosphorylated by host on serines and threonines. In terms of processing, ubiquitinated; targets the protein for rapid degradation via the ubiquitin system. Nsp4 is present in extremely low quantities due to low frequency of translation through the amber stop-codon and the degradation by the ubiquitin pathway.

It localises to the host cytoplasmic vesicle membrane. It catalyses the reaction RNA(n) + a ribonucleoside 5'-triphosphate = RNA(n+1) + diphosphate. The enzyme catalyses 4-O-(ADP-D-ribosyl)-L-aspartyl-[protein] + H2O = L-aspartyl-[protein] + ADP-D-ribose + H(+). The catalysed reaction is 5-O-(ADP-D-ribosyl)-L-glutamyl-[protein] + H2O = L-glutamyl-[protein] + ADP-D-ribose + H(+). It carries out the reaction RNA(n) + ATP = RNA(n)-3'-adenine ribonucleotide + diphosphate. It catalyses the reaction ADP-alpha-D-ribose 1''-phosphate + H2O = ADP-D-ribose + phosphate. Polyprotein P1234: Inactive precursor of the viral replicase, which is activated by cleavages carried out by the viral protease nsP2. In terms of biological role, the early replication complex formed by the polyprotein P123 and nsP4 synthesizes minus-strand RNAs. As soon P123 is cleaved into mature proteins, the plus-strand RNAs synthesis begins. Its function is as follows. The early replication complex formed by the polyprotein P123' and nsP4 synthesizes minus-strand RNAs. Polyprotein P123' is a short-lived polyprotein that accumulates during early stage of infection. As soon P123' is cleaved into mature proteins, the plus-strand RNAs synthesis begins. Functionally, seems to be essential for minus-strand RNAs and subgenomic 26S mRNAs synthesis. Displays mono-ADP-ribosylhydrolase activity. ADP-ribosylation is a post-translational modification that controls various processes of the host cell and the virus probably needs to revert it for optimal viral replication. Binds proteins of FXR family and sequesters them into the viral RNA replication complexes thereby inhibiting the formation of host stress granules on viral mRNAs. The nsp3'-FXR complexes bind viral RNAs and probably orchestrate the assembly of viral replication complexes, thanks to the ability of FXR family members to self-assemble and bind DNA. Seems to be essential for minus-strand RNAs and subgenomic 26S mRNAs synthesis. Displays mono-ADP-ribosylhydrolase activity. ADP-ribosylation is a post-translational modification that controls various processes of the host cell and the virus probably needs to revert it for optimal viral replication. Binds proteins of G3BP family and sequesters them into the viral RNA replication complexes thereby inhibiting the formation of host stress granules on viral mRNAs. The nsp3-G3BP complexes bind viral RNAs and probably orchestrate the assembly of viral replication complexes, thanks to the ability of G3BP family members to self-assemble and bind DNA. In terms of biological role, RNA dependent RNA polymerase. Replicates genomic and antigenomic RNA by recognizing replications specific signals. The early replication complex formed by the polyprotein P123 and nsP4 synthesizes minus-strand RNAs. The late replication complex composed of fully processed nsP1-nsP4 is responsible for the production of genomic and subgenomic plus-strand RNAs. The polypeptide is Polyprotein nsP1234 (Ross river virus (strain T48) (RRV)).